The following is a 771-amino-acid chain: Choline transporter-like protein 1 (771 aa).

A helical transmembrane segment spans residues 96–116; that stretch reads FLFFVFLCGWVVVAGFGIMWG. Residues Asn141 and Asn259 are each glycosylated (N-linked (GlcNAc...) asparagine). 4 consecutive transmembrane segments (helical) span residues 312-332, 335-355, 392-412, and 441-461; these read WWQTLILIFAAGILSFIWTVI, LLGSLIIWLSILIVLVALGFG, LVVAIATSVLLLIFLLVILFI, and LFPFLLHIGVFALWGSIAIWL. Asn480 carries an N-linked (GlcNAc...) asparagine glycan. 5 consecutive transmembrane segments (helical) span residues 514–534, 566–586, 603–623, 662–682, and 701–721; these read LFAFFWLSCFVTALGDIALAG, LGSIAFGSLIIAIVKIIRVLL, WFLMCLKCCFWCLEVFFKFLT, AGILLFLGKSMITLGMGILSF, and YYFVPIVIVVIGSYFMADLFF.

Belongs to the CTL (choline transporter-like) family.

The protein localises to the membrane. In Caenorhabditis elegans, this protein is Choline transporter-like protein 1 (chtl-1).